Reading from the N-terminus, the 161-residue chain is V-type proton ATPase subunit c (161 aa).

Over 1–9 (MSTDLCPVY) the chain is Lumenal. Residues 10-32 (APFFGVMGCTAAIVFASFGAAYG) form a helical membrane-spanning segment. The Cytoplasmic segment spans residues 33–54 (TAKAGVGISAMGVLRPDLIVKN). A helical membrane pass occupies residues 55 to 75 (TIPVVMAGIIAIYGLVVSVLI). Residues 76-91 (SGNLKQILSLYSGFIQ) lie on the Lumenal side of the membrane. The helical transmembrane segment at 92–113 (LGAGLSVGLAGLAAGFAIGIVG) threads the bilayer. Topologically, residues 114–125 (DAGVRGTAQQPR) are cytoplasmic. A helical transmembrane segment spans residues 126–151 (LFVAMILILIFAEVLGLYGLIVALLL). At 152–161 (NTRATDNVTC) the chain is on the lumenal side.

Belongs to the V-ATPase proteolipid subunit family. As to quaternary structure, V-ATPase is a heteromultimeric enzyme composed of a peripheral catalytic V1 complex (components A to H) attached to an integral membrane V0 proton pore complex (components: a, c, c', c'', d, e, f and VOA1). The decameric c-ring forms the proton-conducting pore, and is composed of eight proteolipid subunits c, one subunit c' and one subunit c''.

It localises to the vacuole membrane. In terms of biological role, proton-conducting pore forming subunit of the V0 complex of vacuolar(H+)-ATPase (V-ATPase), a multisubunit enzyme composed of a peripheral complex (V1) that hydrolyzes ATP and a membrane integral complex (V0) that translocates protons. V-ATPase is responsible for acidifying and maintaining the pH of intracellular compartments. This is V-type proton ATPase subunit c from Schizosaccharomyces pombe (strain 972 / ATCC 24843) (Fission yeast).